We begin with the raw amino-acid sequence, 947 residues long: Transcriptional regulator WAR1 (947 aa).

The span at 1-10 (MSDTTPEKGS) shows a compositional bias: basic and acidic residues. The tract at residues 1–52 (MSDTTPEKGSVDSVSPSASNGSNTNNPLNNSSPQPLKSNESDKKPKVTRRSV) is disordered. Over residues 19 to 38 (SNGSNTNNPLNNSSPQPLKS) the composition is skewed to low complexity. The segment at residues 54–86 (CKSCHSLKVKCTPSDPNNPSAPCVRCINANRIC) is a DNA-binding region (zn(2)-C6 fungal-type). Residues 96–222 (RRKKSEILEA…SPTSKDDEIN (127 aa)) are disordered. Over residues 129–142 (NSSENYSSSINNAN) the composition is skewed to low complexity. Composition is skewed to polar residues over residues 143–158 (DSSL…TFDP) and 167–185 (QASS…QSAA).

As to quaternary structure, homodimer.

Its subcellular location is the nucleus. Its function is as follows. Transcription factor required for yeast cell adherence to silicone substrate. Plays a role in resistance to weak organic acids such as acetate and sorbate. Binds in vitro to a nitric oxide-responsive element (NORE) but seems not to be involved in response to nitrosative stress. The protein is Transcriptional regulator WAR1 (WAR1) of Candida albicans (strain SC5314 / ATCC MYA-2876) (Yeast).